The primary structure comprises 210 residues: MSCPNYCSGNSNSGSLRTSRHIPLTSIDLCPTSVSCGDVLYLPTSSQDHTWVTDNCQETCGEPTSCQPVHCETGNLETSCGSSTAYYVPRPCQGSSFLPASFFSSSCLPVSCRPQRYVSSGCRPLRPLLNSYQPIGDCVPNAYRPQFCLSKSCQPQNLLTSGCQPSSCLAYRPQSLHVVSSSLRPLGPLFSGCQPLTHVFSTCRPSCSGL.

Belongs to the PMG family. In terms of assembly, interacts with hair keratins. In terms of tissue distribution, localized high up in the well differentiated portion of the hair follicle cuticle (about 10-15 cell layers above the apex of the dermal papilla).

In the hair cortex, hair keratin intermediate filaments are embedded in an interfilamentous matrix, consisting of hair keratin-associated proteins (KRTAP), which are essential for the formation of a rigid and resistant hair shaft through their extensive disulfide bond cross-linking with abundant cysteine residues of hair keratins. The matrix proteins include the high-sulfur and high-glycine-tyrosine keratins. This chain is Keratin-associated protein 26-1 (KRTAP26-1), found in Homo sapiens (Human).